We begin with the raw amino-acid sequence, 486 residues long: Malonate-semialdehyde dehydrogenase 2 (486 aa).

NAD(+) is bound by residues Phe-154, Lys-178, Glu-181, Arg-182, and Ser-231. Cys-286 serves as the catalytic Nucleophile. Glu-385 contacts NAD(+).

Belongs to the aldehyde dehydrogenase family. IolA subfamily. Homotetramer.

The enzyme catalyses 3-oxopropanoate + NAD(+) + CoA + H2O = hydrogencarbonate + acetyl-CoA + NADH + H(+). It catalyses the reaction 2-methyl-3-oxopropanoate + NAD(+) + CoA + H2O = propanoyl-CoA + hydrogencarbonate + NADH + H(+). The protein operates within polyol metabolism; myo-inositol degradation into acetyl-CoA; acetyl-CoA from myo-inositol: step 7/7. Catalyzes the oxidation of malonate semialdehyde (MSA) and methylmalonate semialdehyde (MMSA) into acetyl-CoA and propanoyl-CoA, respectively. Is involved in a myo-inositol catabolic pathway. Bicarbonate, and not CO2, is the end-product of the enzymatic reaction. This is Malonate-semialdehyde dehydrogenase 2 from Shouchella clausii (strain KSM-K16) (Alkalihalobacillus clausii).